Reading from the N-terminus, the 306-residue chain is Non-specific ribonucleoside hydrolase RihC (306 aa).

The active site involves histidine 235.

It belongs to the IUNH family. RihC subfamily.

Functionally, hydrolyzes both purine and pyrimidine ribonucleosides with a broad-substrate specificity. This chain is Non-specific ribonucleoside hydrolase RihC, found in Salmonella typhi.